We begin with the raw amino-acid sequence, 320 residues long: 1-aminocyclopropane-1-carboxylate oxidase 2 (320 aa).

Positions 111–143 (DEYRTAMKDFGKRLENLAEDLLDLLCENLGLEK) form a coiled coil. The region spanning 156 to 256 (PTFGTKVSNY…RMSVASFYNP (101 aa)) is the Fe2OG dioxygenase domain. Residues H180, D182, and H237 each contribute to the Fe cation site. R247 is a 2-oxoglutarate binding site.

This sequence belongs to the iron/ascorbate-dependent oxidoreductase family. Fe(2+) serves as cofactor. Requires Cu(2+) as cofactor. In terms of tissue distribution, expressed in vegetative tissues. Constitutively expressed in leaves and blades. In ethylene exposed etiolated seedlings, localized in cells at the outer side of the exaggerated hook in an ethylene-dependent manner and following an ethylene sensitive pattern. Also detected in the root tip when treated by ethylene.

The enzyme catalyses 1-aminocyclopropane-1-carboxylate + L-ascorbate + O2 = ethene + L-dehydroascorbate + hydrogen cyanide + CO2 + 2 H2O. Its pathway is alkene biosynthesis; ethylene biosynthesis via S-adenosyl-L-methionine; ethylene from S-adenosyl-L-methionine: step 2/2. Enzyme involved in the ethylene biosynthesis. Required to mediate the 1-aminocyclopropane-1-carboxylic acid (ACC)-mediated reversion of the ABA-induced inhibition of seed germination via endosperm rupture. May promote stem elongation by maximizing the extensibility cells, possibly by activating ethylene biosynthesis, in response to very-long-chain fatty acids (VLCFAs C20:0 to C30:0). The sequence is that of 1-aminocyclopropane-1-carboxylate oxidase 2 (ACO2) from Arabidopsis thaliana (Mouse-ear cress).